A 203-amino-acid chain; its full sequence is Mitotic spindle checkpoint component mad2 (203 aa).

One can recognise an HORMA domain in the interval 13–197; sequence KGSSKLVSEF…TSMHKIDCQV (185 aa).

It belongs to the MAD2 family. Interacts with mad3 and slp1.

The protein resides in the nucleus. Its function is as follows. Feedback control that prevents cells with incompletely assembled spindles from leaving mitosis. It interacts with the anaphase promoting complex/cyclosome (APC/C) thereby inhibiting APC/C-dependent proteolysis, a step required for exit from mitosis. The protein is Mitotic spindle checkpoint component mad2 of Schizosaccharomyces pombe (strain 972 / ATCC 24843) (Fission yeast).